We begin with the raw amino-acid sequence, 86 residues long: Toxin Tpa4 (86 aa).

Residues 1-19 (MNYFVLIAVACLLTAGTES) form the signal peptide. The region spanning 21 to 82 (KDGYPLEYDN…EPIKTSGRCR (62 aa)) is the LCN-type CS-alpha/beta domain. 4 cysteine pairs are disulfide-bonded: Cys-31–Cys-81, Cys-35–Cys-57, Cys-43–Cys-64, and Cys-47–Cys-66. Residue Pro-83 is modified to Proline amide.

The protein belongs to the long (4 C-C) scorpion toxin superfamily. Sodium channel inhibitor family. Alpha subfamily. Expressed by the venom gland.

Its subcellular location is the secreted. Functionally, alpha toxins bind voltage-independently at site-3 of sodium channels (Nav) and inhibit the inactivation of the activated channels, thereby blocking neuronal transmission. The protein is Toxin Tpa4 of Tityus pachyurus (Colombian scorpion).